The primary structure comprises 180 residues: 4-hydroxy-3-methylbut-2-enyl diphosphate reductase (180 aa).

[4Fe-4S] cluster is bound at residue cysteine 12. (2E)-4-hydroxy-3-methylbut-2-enyl diphosphate is bound by residues histidine 41 and histidine 74. Residues histidine 41 and histidine 74 each coordinate dimethylallyl diphosphate. 2 residues coordinate isopentenyl diphosphate: histidine 41 and histidine 74. Cysteine 96 is a binding site for [4Fe-4S] cluster. Residue histidine 124 participates in (2E)-4-hydroxy-3-methylbut-2-enyl diphosphate binding. Histidine 124 provides a ligand contact to dimethylallyl diphosphate. Isopentenyl diphosphate is bound at residue histidine 124. Glutamate 126 serves as the catalytic Proton donor. Residue threonine 168 participates in (2E)-4-hydroxy-3-methylbut-2-enyl diphosphate binding.

The protein belongs to the IspH family. It depends on [4Fe-4S] cluster as a cofactor.

It catalyses the reaction isopentenyl diphosphate + 2 oxidized [2Fe-2S]-[ferredoxin] + H2O = (2E)-4-hydroxy-3-methylbut-2-enyl diphosphate + 2 reduced [2Fe-2S]-[ferredoxin] + 2 H(+). The catalysed reaction is dimethylallyl diphosphate + 2 oxidized [2Fe-2S]-[ferredoxin] + H2O = (2E)-4-hydroxy-3-methylbut-2-enyl diphosphate + 2 reduced [2Fe-2S]-[ferredoxin] + 2 H(+). It functions in the pathway isoprenoid biosynthesis; dimethylallyl diphosphate biosynthesis; dimethylallyl diphosphate from (2E)-4-hydroxy-3-methylbutenyl diphosphate: step 1/1. The protein operates within isoprenoid biosynthesis; isopentenyl diphosphate biosynthesis via DXP pathway; isopentenyl diphosphate from 1-deoxy-D-xylulose 5-phosphate: step 6/6. In terms of biological role, catalyzes the conversion of 1-hydroxy-2-methyl-2-(E)-butenyl 4-diphosphate (HMBPP) into a mixture of isopentenyl diphosphate (IPP) and dimethylallyl diphosphate (DMAPP). Acts in the terminal step of the DOXP/MEP pathway for isoprenoid precursor biosynthesis. This is 4-hydroxy-3-methylbut-2-enyl diphosphate reductase from Pseudomonas fluorescens.